A 168-amino-acid polypeptide reads, in one-letter code: Endoribonuclease YbeY (168 aa).

His-132, His-136, and His-142 together coordinate Zn(2+).

It belongs to the endoribonuclease YbeY family. It depends on Zn(2+) as a cofactor.

The protein localises to the cytoplasm. Functionally, single strand-specific metallo-endoribonuclease involved in late-stage 70S ribosome quality control and in maturation of the 3' terminus of the 16S rRNA. The sequence is that of Endoribonuclease YbeY from Clostridium perfringens (strain SM101 / Type A).